The primary structure comprises 109 residues: Ig kappa chain V region 3374 (109 aa).

The framework-1 stretch occupies residues 1 to 24 (ADIVMTQTPASVSAAVGGTVTINC). The segment at 25 to 35 (QASQNIDSWLA) is complementarity-determining-1. The segment at 36–50 (WYQQKPGQPPKVLIY) is framework-2. The complementarity-determining-2 stretch occupies residues 51-57 (RTSTLAS). Residues 58–89 (GVPSRFKGSRSGTEFTLTISDLECADAATYYC) form a framework-3 region. The tract at residues 90–98 (QSYYSISSA) is complementarity-determining-3. Positions 99-108 (FGGGTEVVVK) are framework-4.

The polypeptide is Ig kappa chain V region 3374 (Oryctolagus cuniculus (Rabbit)).